The primary structure comprises 827 residues: MQHPTNARYDFKTIESKWQKNWAENKTYSVTEDEDKEKYYLLEMFPYPSGRIHMGHVRNYTIGDVVARYKRMRGFNVLHPMGWDAFGLPAENAAQKNNTHPSVWTYDNIDYMRQQLQQLGLSYDWDREMATCNPKYYRQEQQLFIEMLEKGLIYEKVTTVNWCDTCQTVLANEQVIEGACWRCDQLVHPRKMNGWFFKITDYAEELLADLDKLTGWPEKVRTMQRNWIGKSTGLSCDFQLEDMDDKISIFTTRPDTIYGVTFMSLAPEHPLVEQLIAGTDREQEVRDFVKEVLEDKQRQDPTQEPEKKGIFTGKYCTNPFNGDRVPVYVANFVLIEYGTGAVMAVPAHDQRDFEFAGKYKLPIIPVVVPEGEAVNPADMEEALTNHGLLINSGDFTGMASQEAQAKIIAYAEEKGFGSPLTTYRLRDWGISRQRYWGAPIPIIHCDSCGIVPVPIDQLPVELPEDKDKSSVCAPLHQRPDFINTTCPKCGQPAKRETDTMDTFVESSWYFARYTSPRHTEAPLDKAKAKYWLAVDQYIGGVEHAILHLLYSRFFTKVLRDLGYLEIDEPFIKLLTQGMVIKDGTKMSKSKGNVVDPHDLISEFGADTTRLFSLFAAPPERDLEWSSEGVEGSSRFLNRIYRFITANFEALTAGEAFPKKLSEEDRLLHRKNHQTIKRVTENIEHNFHFNTAISAVMELVNQLFAQFKNEKSIAAPAVLRASVDSVLLLLSPMVPHFCNEMWMVLGNTEPIENQAWPEFDIEATKEDLLTIIIQVRGKVRSKIQVPVDIEEDEIVALALADENCQKFIDGQPIKKTIVVKKKLVNIVI.

The 'HIGH' region signature appears at 46 to 56 (PYPSGRIHMGH). A 'KMSKS' region motif is present at residues 585–589 (KMSKS). Lys-588 contributes to the ATP binding site.

It belongs to the class-I aminoacyl-tRNA synthetase family.

The protein localises to the cytoplasm. It carries out the reaction tRNA(Leu) + L-leucine + ATP = L-leucyl-tRNA(Leu) + AMP + diphosphate. This chain is Leucine--tRNA ligase, found in Desulfotalea psychrophila (strain LSv54 / DSM 12343).